The chain runs to 489 residues: Inositol-pentakisphosphate 2-kinase (489 aa).

An EXKPK motif motif is present at residues 136–140; sequence EIKPK.

It belongs to the IPK1 type 2 family. In brain, it is expressed throughout the hippocampus (CA1, CA2, CA3 and dentate gyrus), inner layers of the cerebral cortex, and Purkinje cells of the cerebellum. In heart, it is expressed in cardiomyocytes but not in interstitial cells, blood vessels, or valves. Also expressed in testis.

It is found in the cytoplasm. The protein resides in the nucleus. The catalysed reaction is 1D-myo-inositol 1,3,4,5,6-pentakisphosphate + ATP = 1D-myo-inositol hexakisphosphate + ADP + H(+). Its function is as follows. Phosphorylates Ins(1,3,4,5,6)P5 at position 2 to form Ins(1,2,3,4,5,6)P6 (InsP6 or phytate). InsP6 is involved in many processes such as mRNA export, non-homologous end-joining, endocytosis, ion channel regulation. It also protects cells from TNF-alpha-induced apoptosis. The sequence is that of Inositol-pentakisphosphate 2-kinase (Ippk) from Mus musculus (Mouse).